The sequence spans 779 residues: Endoribonuclease YSH1 (779 aa).

The Zn(2+) site is built by His-68, His-70, Asp-72, His-73, His-163, and Asp-184. Residue His-408 is the Proton donor of the active site. His-430 lines the Zn(2+) pocket. The residue at position 517 (Ser-517) is a Phosphoserine; by ATM or ATR.

It belongs to the metallo-beta-lactamase superfamily. RNA-metabolizing metallo-beta-lactamase-like family. CPSF2/YSH1 subfamily. Component of the cleavage and polyadenylation factor (CPF) complex, which is composed of at least PTI1, SYC1, SSU72, GLC7, MPE1, REF2, PFS2, PTA1, YSH1/BRR5, SWD2, CFT2/YDH1, YTH1, CFT1/YHH1, FIP1 and PAP1. Interacts with FIP1, PFS2, RNA14 and YTH1. Zn(2+) serves as cofactor.

It localises to the nucleus. Its function is as follows. Component of the cleavage and polyadenylation factor (CPF) complex, which plays a key role in polyadenylation-dependent pre-mRNA 3'-end formation and cooperates with cleavage factors including the CFIA complex and NAB4/CFIB. Has endonuclease activity. This chain is Endoribonuclease YSH1 (YSH1), found in Saccharomyces cerevisiae (strain ATCC 204508 / S288c) (Baker's yeast).